The sequence spans 448 residues: Methylenetetrahydrofolate--tRNA-(uracil-5-)-methyltransferase TrmFO (448 aa).

Gly-13 to Gly-18 contacts FAD.

Belongs to the MnmG family. TrmFO subfamily. It depends on FAD as a cofactor.

The protein localises to the cytoplasm. It carries out the reaction uridine(54) in tRNA + (6R)-5,10-methylene-5,6,7,8-tetrahydrofolate + NADH + H(+) = 5-methyluridine(54) in tRNA + (6S)-5,6,7,8-tetrahydrofolate + NAD(+). The enzyme catalyses uridine(54) in tRNA + (6R)-5,10-methylene-5,6,7,8-tetrahydrofolate + NADPH + H(+) = 5-methyluridine(54) in tRNA + (6S)-5,6,7,8-tetrahydrofolate + NADP(+). Its function is as follows. Catalyzes the folate-dependent formation of 5-methyl-uridine at position 54 (M-5-U54) in all tRNAs. The chain is Methylenetetrahydrofolate--tRNA-(uracil-5-)-methyltransferase TrmFO from Streptococcus pyogenes serotype M12 (strain MGAS2096).